A 123-amino-acid polypeptide reads, in one-letter code: Undecaprenol kinase (123 aa).

The Cytoplasmic segment spans residues 1–33 (MDSKDHRNELNRFFKSFVHAGRGIWETARTERN). Residues 34–51 (FQFHAAAACAVLICGFLV) traverse the membrane as a helical segment. At 52-57 (ELSIIE) the chain is on the extracellular side. Residues 58-74 (WMIIFLLIGGMFSLELL) traverse the membrane as a helical segment. The Cytoplasmic segment spans residues 75 to 99 (NTAIEHTVDLITDKHHPLAKAAKDA). Residues 100–120 (AAGAVCVFAVISCIIGLLIFL) traverse the membrane as a helical segment. At 121-123 (PKL) the chain is on the extracellular side.

This sequence belongs to the bacterial diacylglycerol kinase family.

Its subcellular location is the cell membrane. It carries out the reaction di-trans,octa-cis-undecaprenol + ATP = di-trans,octa-cis-undecaprenyl phosphate + ADP + H(+). Catalyzes the phosphorylation of undecaprenol in vitro, which is probably the physiological substrate. Exhibits no detectable activity against other substrates such as monoacylglycerol, ceramide, or diacylglycerol (DAG). Appears indispensable for the maintenance of spore stability and viability in B.subtilis. The sequence is that of Undecaprenol kinase (dgkA) from Bacillus subtilis (strain 168).